A 156-amino-acid chain; its full sequence is MEIIIIVLGIILDRVTKLWAIKRLSIGEDIVVIKDFFSFSYLENRGAAFGIFKDKQLFLISITMVAILLMMFYLFINKTNPKILKISLSLIISGAIGNLIDRIKYRYVVDFIFFHYKDKYHFPIFNIADVLVSLGTILLIIFIIKEDGYEDRKIFS.

Transmembrane regions (helical) follow at residues 57-77 (LFLI…LFIN) and 83-103 (ILKI…IDRI). Residues Asp110 and Asp129 contribute to the active site. Residues 124–144 (IFNIADVLVSLGTILLIIFII) traverse the membrane as a helical segment.

Belongs to the peptidase A8 family.

Its subcellular location is the cell membrane. The enzyme catalyses Release of signal peptides from bacterial membrane prolipoproteins. Hydrolyzes -Xaa-Yaa-Zaa-|-(S,diacylglyceryl)Cys-, in which Xaa is hydrophobic (preferably Leu), and Yaa (Ala or Ser) and Zaa (Gly or Ala) have small, neutral side chains.. Its pathway is protein modification; lipoprotein biosynthesis (signal peptide cleavage). Functionally, this protein specifically catalyzes the removal of signal peptides from prolipoproteins. The chain is Lipoprotein signal peptidase from Clostridium tetani (strain Massachusetts / E88).